The sequence spans 154 residues: Ribonuclease H (154 aa).

One can recognise an RNase H type-1 domain in the interval 1 to 141 (MKRIEAYTDG…ADELAREGME (141 aa)). 4 residues coordinate Mg(2+): aspartate 9, glutamate 47, aspartate 69, and aspartate 133.

Belongs to the RNase H family. In terms of assembly, monomer. Requires Mg(2+) as cofactor.

Its subcellular location is the cytoplasm. The enzyme catalyses Endonucleolytic cleavage to 5'-phosphomonoester.. Endonuclease that specifically degrades the RNA of RNA-DNA hybrids. This is Ribonuclease H from Brucella anthropi (strain ATCC 49188 / DSM 6882 / CCUG 24695 / JCM 21032 / LMG 3331 / NBRC 15819 / NCTC 12168 / Alc 37) (Ochrobactrum anthropi).